Consider the following 235-residue polypeptide: Ubiquitin-like-conjugating enzyme ATG10 (235 aa).

Catalysis depends on C196, which acts as the Glycyl thioester intermediate.

This sequence belongs to the ATG10 family. As to quaternary structure, forms homooligomers. Interacts with ATG7 and ATG12.

The protein resides in the preautophagosomal structure membrane. E2-like enzyme required for the cytoplasm to vacuole transport (Cvt), autophagy and nucleophagy. Acts as an E2-like enzyme that catalyzes the conjugation of ATG12 to ATG5. ATG12 conjugation to ATG5 is required for proper localization of ATG8 to the preautophagosomal structure (PAS). Likely serves as an ATG5-recognition molecule. Autophagy is required for proper vegetative growth, asexual/sexual reproduction, and full virulence. Autophagy is particularly involved in the biosynthesis of deoxynivalenol (DON), an important virulence determinant. This chain is Ubiquitin-like-conjugating enzyme ATG10, found in Gibberella zeae (strain ATCC MYA-4620 / CBS 123657 / FGSC 9075 / NRRL 31084 / PH-1) (Wheat head blight fungus).